The chain runs to 66 residues: Rho-elapitoxin-Da1b (66 aa).

4 disulfides stabilise this stretch: C3–C24, C17–C42, C46–C58, and C59–C64.

The protein belongs to the three-finger toxin family. Short-chain subfamily. Aminergic toxin sub-subfamily. As to expression, expressed by the venom gland.

The protein localises to the secreted. In terms of biological role, non-competitive antagonist of alpha-2 adrenergic receptors (ADRA2) in smooth muscles, and partial antagonist of D3 dopamine receptors (DRD3) (inhibits 25% of methylspiperone binding to this receptor). Also shows a low antagonism on D2 dopamine receptors (DRD2) (short isoform). Shows high affinity to adrenergic receptors (Ki=14 nM (ADRA2A), Ki=73 nM (ADRA2B), and Ki=38 nM (ADRA2C)). Increases heart rate and blood catecholamine concentrations. The sequence is that of Rho-elapitoxin-Da1b from Dendroaspis angusticeps (Eastern green mamba).